Consider the following 778-residue polypeptide: Endonuclease MutS2 (778 aa).

328 to 335 (GPNTGGKT) lines the ATP pocket. The Smr domain maps to 702–777 (LDLRGKRYEE…GSGATIVTFK (76 aa)).

Belongs to the DNA mismatch repair MutS family. MutS2 subfamily. Homodimer. Binds to stalled ribosomes, contacting rRNA.

Functionally, endonuclease that is involved in the suppression of homologous recombination and thus may have a key role in the control of bacterial genetic diversity. Acts as a ribosome collision sensor, splitting the ribosome into its 2 subunits. Detects stalled/collided 70S ribosomes which it binds and splits by an ATP-hydrolysis driven conformational change. Acts upstream of the ribosome quality control system (RQC), a ribosome-associated complex that mediates the extraction of incompletely synthesized nascent chains from stalled ribosomes and their subsequent degradation. Probably generates substrates for RQC. This Streptococcus pneumoniae (strain ATCC 700669 / Spain 23F-1) protein is Endonuclease MutS2.